Reading from the N-terminus, the 101-residue chain is Large ribosomal subunit protein uL24 (101 aa).

This sequence belongs to the universal ribosomal protein uL24 family. As to quaternary structure, part of the 50S ribosomal subunit.

In terms of biological role, one of two assembly initiator proteins, it binds directly to the 5'-end of the 23S rRNA, where it nucleates assembly of the 50S subunit. Its function is as follows. One of the proteins that surrounds the polypeptide exit tunnel on the outside of the subunit. This is Large ribosomal subunit protein uL24 from Borrelia recurrentis (strain A1).